Consider the following 202-residue polypeptide: Homeobox protein ceh-13 (202 aa).

Disordered regions lie at residues 60–83 and 166–202; these read PATA…LPTG and RMKE…KNFK. A compositionally biased stretch (low complexity) spans 63 to 81; the sequence is ASGLSPPASRSSNSSAELP. Positions 114-173 form a DNA-binding region, homeobox; sequence NGTNRTNFTTHQLTELEKEFHTAKYVNRTRRTEIASNLKLQEAQVKIWFQNRRMKEKKRE. Residues 183–194 are compositionally biased toward polar residues; the sequence is TWESNSPTSSCS.

Its subcellular location is the nucleus. This chain is Homeobox protein ceh-13 (ceh-13), found in Caenorhabditis elegans.